Consider the following 270-residue polypeptide: Interleukin-1 beta (270 aa).

The propeptide occupies 1–118; it reads MATVPEPTSE…VYDDDAFVCD (118 aa).

It belongs to the IL-1 family. As to quaternary structure, monomer. In its precursor form, weakly interacts with full-length MEFV; the mature cytokine does not interact at all. Interacts with integrins ITGAV:ITGBV and ITGA5:ITGB1; integrin-binding is required for IL1B signaling. Interacts with cargo receptor TMED10; the interaction is direct and is required for the secretion of IL1B mature form. Interacts with HSP90AB1; the interaction facilitates cargo translocation into the ERGIC. Interacts with HSP90B1; the interaction facilitates cargo translocation into the ERGIC.

It localises to the cytoplasm. The protein resides in the cytosol. It is found in the secreted. The protein localises to the lysosome. Its subcellular location is the extracellular exosome. Its function is as follows. Potent pro-inflammatory cytokine. Initially discovered as the major endogenous pyrogen, induces prostaglandin synthesis, neutrophil influx and activation, T-cell activation and cytokine production, B-cell activation and antibody production, and fibroblast proliferation and collagen production. Promotes Th17 differentiation of T-cells. Synergizes with IL12/interleukin-12 to induce IFNG synthesis from T-helper 1 (Th1) cells. Plays a role in angiogenesis by inducing VEGF production synergistically with TNF and IL6. Involved in transduction of inflammation downstream of pyroptosis: its mature form is specifically released in the extracellular milieu by passing through the gasdermin-D (GSDMD) pore. This is Interleukin-1 beta (IL1B) from Eumetopias jubatus (Steller sea lion).